The following is a 1074-amino-acid chain: MLSVENGLDPRAAIQVIKKKLVGSVKALQKQHVSLDTVVTSEDGDANTMCSALEAVFIHGLHAKHIRAEAGGKRKKHTHQKALPQPVFWPLLKAITHRHIVSDLEHLVFINTDVGRCRAWLRLALNDGLMECYLKLLLQEPARLCEYYQPTALLRDAEEAEFLLSFLQGLTSLSFELSYKSAILNEWTLTPLSLSGLCPLSELDPLTTSGAELQRKESLDSISHSSGSEDIEVQHSGHKIRRNRKLTASSLSLDTASSSQLSCSLNSDSCLLQENGPKSPDHSEEPMSYDSDLGMANTDDPDRSLQEVLSEFSKAQVNSAPSSGPNQEPDTPMFQTPLSLHSLATSTHLHFEGSEELFPAHKSSGTSSGGHKHQLLPQETPDEKQLGTAQAGPAQSTSDQQPSSPVGGAAGQGSGPWKALEYGRVGPKLVVSSPTSPKGKSWISEDDFCRPPQEPALKSAAGLCTSPVQDTPESRAALHGPFSQGPRKSCSLGALDKACVPSQACGNAQPAPAPAPAPAPAPAPAPGVTQDHKNFCVVHRRQMGLSNPFRGLMKLGTVARRGAMGIWKEFFCELSPLEFRLYLSDEERTCVESCSLLRCEAVGPAHSDGRFELVFSGKKLALRASSQDEAEDWLDRVREALQKVRPQQEDEWVNIQYPDQAEDAPEAPPDSLPPYSTLLPEPAGAQGMQLDWTSAQVPEPDAIKESLLYLYADRTWVPYIFSLSLESLKCFRVRNNEKMLSDSHGVETIRDILPDTSLGGPAFFKIITAKAVLKLQAKNTEEATHWRDLVRKVLASYLESAEEAVTLGGSLDEKCQEVLKFATRENGFLLQYLVAIPTEKGLDSQGCFCAGCSRQIGFSFVRPKLCAFSGLYYCDFCHQDDASVIPARIIHNWDLTKRPVCRQALKFLAQIRAQPLINLQLVNASLYEHVERMHLIGRSREQLKLLGDYLGLCRSGALKELCKRLSHRNYLLESPHRFSVADLQQIAEGVYEGFLKALIEFASQHVYHCDLCTQRGFICQICHHQDIIFPFEFDTTVRCAECRTVFHQSCQAVVRKGCPRCARRRKYQEQNVVS.

Residues 40–182 (TSEDGDANTM…LSFELSYKSA (143 aa)) form the RUN domain. Disordered stretches follow at residues 214–244 (QRKE…RRNR), 272–336 (LQEN…MFQT), and 382–454 (DEKQ…PPQE). At Ser218 the chain carries Phosphoserine. Composition is skewed to polar residues over residues 313–329 (SKAQ…NQEP) and 393–404 (PAQSTSDQQPSS). Phosphoserine occurs at positions 433, 436, and 491. Positions 506–526 (GNAQPAPAPAPAPAPAPAPAP) are disordered. The span at 511–525 (APAPAPAPAPAPAPA) shows a compositional bias: pro residues. The region spanning 551–642 (GLMKLGTVAR…WLDRVREALQ (92 aa)) is the PH 1 domain. An LIR motif is present at residues 649-655 (EDEWVNI). The interval 661-680 (AEDAPEAPPDSLPPYSTLLP) is disordered. Residues 672-1074 (LPPYSTLLPE…RKYQEQNVVS (403 aa)) are interaction with RAB7A. The 95-residue stretch at 701-795 (DAIKESLLYL…WRDLVRKVLA (95 aa)) folds into the PH 2 domain. Residues 1004-1058 (QHVYHCDLCTQRGFICQICHHQDIIFPFEFDTTVRCAECRTVFHQSCQAVVRKGC) form a Phorbol-ester/DAG-type zinc finger.

Interacts (via N- and C-terminus) with RAB7A (GTP-bound form). Simultaneously interacts with RAB7A and ARL8B; bringing about clustering and fusion of late endosomes and lysosomes. Interacts (via RUN domain) with ARL8B (GTP-bound form); the interaction is required for PLEKHM1 localization to lysosomes and for ARL8B function in delivery and degradation of endocytic and autophagic cargo in lysosomes. PLEKHM1 and PLEKHM2 compete for interaction with ARL8B. Interacts with ARL8A; the interaction is weaker than with ARL8B. Interacts with VPS41, VPS11, VPS18, VPS33A and VPS39; indicative for an association with the HOPS complex; the interactions with, at least, VPS41, VPS11, VPS18 and VPS33A require ARL8B. Interacts with GABARAP, GABARAPL, GABARAPL2, MAP1LC3A, MAP1LC3B and MAP1LC3C. Interacts with PAFAH1B. Interacts (via N- and C-terminus) with NDEL1. Interacts (via C-terminus) with MAP3K7. Interacts (via N- and C-terminus) with FAM98A. Interacts (via C-terminus) with DEF8; this interaction is weak but increased in a RAB7A-dependent manner. May interact with sialyl-lex-positive protein.

The protein resides in the autolysosome membrane. Its subcellular location is the endosome membrane. It is found in the late endosome membrane. The protein localises to the lysosome membrane. Acts as a multivalent adapter protein that regulates Rab7-dependent and HOPS complex-dependent fusion events in the endolysosomal system and couples autophagic and the endocytic trafficking pathways. Acts as a dual effector of RAB7A and ARL8B that simultaneously binds these GTPases, bringing about clustering and fusion of late endosomes and lysosomes. Required for late stages of endolysosomal maturation, facilitating both endocytosis-mediated degradation of growth factor receptors and autophagosome clearance. Interaction with Arl8b is a crucial factor in the terminal maturation of autophagosomes and to mediate autophagosome-lysosome fusion. Positively regulates lysosome peripheral distribution and ruffled border formation in osteoclasts. May be involved in negative regulation of endocytic transport from early endosome to late endosome/lysosome implicating its association with Rab7. May have a role in sialyl-lex-mediated transduction of apoptotic signals. Involved in bone resorption. The protein is Pleckstrin homology domain-containing family M member 1 of Mus musculus (Mouse).